A 524-amino-acid chain; its full sequence is Cytochrome P450 6k1 (524 aa).

Cys-464 serves as a coordination point for heme.

It belongs to the cytochrome P450 family. Requires heme as cofactor.

The protein resides in the endoplasmic reticulum membrane. The protein localises to the microsome membrane. The polypeptide is Cytochrome P450 6k1 (CYP6K1) (Blattella germanica (German cockroach)).